A 136-amino-acid chain; its full sequence is Large ribosomal subunit protein uL16 (136 aa).

Belongs to the universal ribosomal protein uL16 family. Part of the 50S ribosomal subunit.

Its function is as follows. Binds 23S rRNA and is also seen to make contacts with the A and possibly P site tRNAs. This is Large ribosomal subunit protein uL16 from Aliivibrio fischeri (strain ATCC 700601 / ES114) (Vibrio fischeri).